Here is a 318-residue protein sequence, read N- to C-terminus: tRNA(Ile)-lysidine synthase (318 aa).

26–31 contacts ATP; it reads SGGADS.

Belongs to the tRNA(Ile)-lysidine synthase family.

The protein resides in the cytoplasm. The enzyme catalyses cytidine(34) in tRNA(Ile2) + L-lysine + ATP = lysidine(34) in tRNA(Ile2) + AMP + diphosphate + H(+). Its function is as follows. Ligates lysine onto the cytidine present at position 34 of the AUA codon-specific tRNA(Ile) that contains the anticodon CAU, in an ATP-dependent manner. Cytidine is converted to lysidine, thus changing the amino acid specificity of the tRNA from methionine to isoleucine. This chain is tRNA(Ile)-lysidine synthase, found in Nocardia farcinica (strain IFM 10152).